Consider the following 201-residue polypeptide: Small ribosomal subunit protein uS4 (201 aa).

One can recognise an S4 RNA-binding domain in the interval 91–151 (SRLDNVVYRA…EKSRKMVWFD (61 aa)).

This sequence belongs to the universal ribosomal protein uS4 family. In terms of assembly, part of the 30S ribosomal subunit. Contacts protein S5. The interaction surface between S4 and S5 is involved in control of translational fidelity.

One of the primary rRNA binding proteins, it binds directly to 16S rRNA where it nucleates assembly of the body of the 30S subunit. Its function is as follows. With S5 and S12 plays an important role in translational accuracy. This chain is Small ribosomal subunit protein uS4, found in Corynebacterium kroppenstedtii (strain DSM 44385 / JCM 11950 / CIP 105744 / CCUG 35717).